The primary structure comprises 395 residues: MAKIIAINAGSSSLKFQLLAMPEETVIAKGLVERIGLKKSIFTIEANGQQHELTEDIPDHAAAVKLLLKDLTGRGIIASLEEIEGIGHRVVHGGEKFNDSVVITDEVLQGIEEVSELAPLHNPANITGIKAFKEVLPNVPAVAVFDTAFHQTMPESAFLYSLPYEYYEKYGIRKYGFHGTSHKYVTHRAAELMETPIEELRILSCHLGNGASIAAVKGGKSIDTSMGFTPLAGVTMGTRSGNIDPALIPYIMEKTGQSVEEVVATLNKKSGLLGITGFSSDLRDIEAAAKEGDERAQVALDVFASRIHKYVGSYAARMGGLDAIVFTAGIGENSATIRERVLKGLSFMGVDVDLEKNNVRGKEAFIEKAGAPVKIIVIPTNEEVMIARDTVRLTS.

Asparagine 8 provides a ligand contact to Mg(2+). An ATP-binding site is contributed by lysine 15. Arginine 89 lines the substrate pocket. Aspartate 146 functions as the Proton donor/acceptor in the catalytic mechanism. ATP contacts are provided by residues 206 to 210 (HLGNG), 281 to 283 (DLR), and 329 to 333 (GIGEN). Glutamate 382 provides a ligand contact to Mg(2+).

Belongs to the acetokinase family. In terms of assembly, homodimer. Mg(2+) serves as cofactor. Mn(2+) is required as a cofactor.

It is found in the cytoplasm. The enzyme catalyses acetate + ATP = acetyl phosphate + ADP. It functions in the pathway metabolic intermediate biosynthesis; acetyl-CoA biosynthesis; acetyl-CoA from acetate: step 1/2. Its function is as follows. Catalyzes the formation of acetyl phosphate from acetate and ATP. Can also catalyze the reverse reaction. This chain is Acetate kinase, found in Shouchella clausii (strain KSM-K16) (Alkalihalobacillus clausii).